A 64-amino-acid polypeptide reads, in one-letter code: Temporin-ALe (64 aa).

The signal sequence occupies residues 1 to 22 (MFTLKKSLLLLFFLGTINLSLC). Positions 23–47 (EQERNAEEERRDEPDERNAEVEKRF) are excised as a propeptide. Residue Leu-62 is modified to Leucine amide.

Expressed by the skin glands.

The protein localises to the secreted. Functionally, antimicrobial peptide with activity against Gram-positive and Gram-negative bacteria and against fungi. Has been tested against S.aureus (MIC=1.25 ug/mL), B.pumilus (MIC=5.0 ug/mL), B.cereus (MIC=15.0 ug/mL), E.coli (MIC=1.25 ug/mL), B.dysenteriae (MIC=5.0 ug/mL), A.cacoaceticus (MIC=15.0 ug/mL), P.aeruginosa (MIC=5.0 ug/mL) and C.albicans (MIC=1.25 ug/mL). Also shows a weak hemolytic activity. This is Temporin-ALe from Amolops loloensis (Lolokou Sucker Frog).